We begin with the raw amino-acid sequence, 622 residues long: Dopamine beta-hydroxylase (622 aa).

Residues 1–20 (MQAHLSHQPCWSSLPSPSVR) are Cytoplasmic-facing. A helical; Signal-anchor for type II membrane protein membrane pass occupies residues 21-41 (EAASMYGTAVAIFLVILVAAL). Residues 42-621 (RGSEPPESPF…TVPITTEADA (580 aa)) are Intragranular-facing. In terms of domain architecture, DOMON spans 61–177 (GILELSWNVS…DTVHLVYGIL (117 aa)). 2 N-linked (GlcNAc...) asparagine glycosylation sites follow: Asn68 and Asn188. 6 cysteine pairs are disulfide-bonded: Cys158–Cys600, Cys236–Cys287, Cys273–Cys299, Cys394–Cys507, Cys398–Cys569, and Cys470–Cys492. Residue Tyr234 is part of the active site. The Cu(2+) site is built by His266 and His267. His337 serves as a coordination point for Cu(2+). Ser350 is modified (phosphoserine; by CaMK). His416 is an active-site residue. Positions 416 and 418 each coordinate Cu(2+). Residue Asn476 is glycosylated (N-linked (GlcNAc...) asparagine). Residue Met491 participates in Cu(2+) binding. An N-linked (GlcNAc...) asparagine glycan is attached at Asn570. Positions 594–622 (EEPTPRCPIRQTQSPANPTVPITTEADAE) are disordered. A compositionally biased stretch (polar residues) spans 603 to 615 (RQTQSPANPTVPI).

It belongs to the copper type II ascorbate-dependent monooxygenase family. In terms of assembly, homotetramer; composed of two disulfide-linked dimers. The cofactor is Cu(2+). In terms of processing, proteolytic cleavage after the membrane-anchor leads to the release of the soluble form. Post-translationally, N-glycosylated. Detected in adrenal gland secretory granules (at protein level). Detected in adrenal gland.

It is found in the cytoplasmic vesicle. It localises to the secretory vesicle lumen. The protein localises to the secretory vesicle. Its subcellular location is the chromaffin granule lumen. The protein resides in the secretory vesicle membrane. It is found in the chromaffin granule membrane. It catalyses the reaction dopamine + 2 L-ascorbate + O2 = (R)-noradrenaline + 2 monodehydro-L-ascorbate radical + H2O. Its pathway is catecholamine biosynthesis; (R)-noradrenaline biosynthesis; (R)-noradrenaline from dopamine: step 1/1. Functionally, catalyzes the hydroxylation of dopamine to noradrenaline (also known as norepinephrine), and is thus vital for regulation of these neurotransmitters. This is Dopamine beta-hydroxylase (Dbh) from Mus musculus (Mouse).